A 171-amino-acid polypeptide reads, in one-letter code: I (171 aa).

Disordered regions lie at residues 57 to 100 (IQYP…LFAQ) and 143 to 171 (PRTS…KRRA). Residues 151–162 (EFKRGGGRERLP) are compositionally biased toward basic and acidic residues.

It belongs to the Orthorubulavirus I protein family.

The chain is I from Mumps virus genotype N (strain L-Zagreb vaccine) (MuV).